A 119-amino-acid chain; its full sequence is Methylglyoxal synthase (119 aa).

The MGS-like domain occupies 1-119 (MKIALIAHDK…KTAELIIKQF (119 aa)). Substrate is bound by residues His-8, Lys-12, 34-37 (TGTT), and 54-55 (SG). Asp-60 acts as the Proton donor/acceptor in catalysis. Substrate is bound at residue His-87.

This sequence belongs to the methylglyoxal synthase family.

It carries out the reaction dihydroxyacetone phosphate = methylglyoxal + phosphate. Functionally, catalyzes the formation of methylglyoxal from dihydroxyacetone phosphate. This Clostridium beijerinckii (strain ATCC 51743 / NCIMB 8052) (Clostridium acetobutylicum) protein is Methylglyoxal synthase.